The sequence spans 226 residues: Protein pdh1 (226 aa).

The first 26 residues, 1-26 (MNHFSKFSVTKRLLILEVLFSAISFG), serve as a signal peptide directing secretion. Over 27–41 (ISIYIKVFGRSSIVT) the chain is Extracellular. The chain crosses the membrane as a helical span at residues 42-62 (FFLLCFHLVPNALFLFPWTII). The Cytoplasmic segment spans residues 63 to 65 (TTS). A helical membrane pass occupies residues 66–86 (FVDANVFTLLSSILILSVYGV). The Extracellular segment spans residues 87 to 97 (EIERSWGHKEY). A helical transmembrane segment spans residues 98-118 (LLFCQFLTVIPNIAVLIPCFI). At 119 to 191 (AYKITDSHYL…VFQSFPWTYF (73 aa)) the chain is on the cytoplasmic side. The chain crosses the membrane as a helical span at residues 192–212 (CLAVSGTCISELYVLFVHPVV). Topologically, residues 213 to 226 (QELFHLESHTQLPI) are extracellular.

It is found in the membrane. This Schizosaccharomyces pombe (strain 972 / ATCC 24843) (Fission yeast) protein is Protein pdh1 (pdh1).